Consider the following 447-residue polypeptide: Protein mab-21-like 4 (447 aa).

The chain is Protein mab-21-like 4 from Homo sapiens (Human).